Here is a 454-residue protein sequence, read N- to C-terminus: Probable succinate-semialdehyde dehydrogenase [NADP(+)] (454 aa).

NADP(+) is bound by residues 130-131 (WN), 154-157 (KHAS), and 206-207 (GS). E228 functions as the Proton acceptor in the catalytic mechanism. Residue L229 coordinates NADP(+). Catalysis depends on C262, which acts as the Nucleophile. E359 contributes to the NADP(+) binding site.

Belongs to the aldehyde dehydrogenase family.

It catalyses the reaction succinate semialdehyde + NADP(+) + H2O = succinate + NADPH + 2 H(+). It participates in amino-acid degradation; 4-aminobutanoate degradation. Catalyzes the NADP(+) dependent oxidation of succinate semialdehyde to succinate. This is Probable succinate-semialdehyde dehydrogenase [NADP(+)] (gabD) from Synechocystis sp. (strain ATCC 27184 / PCC 6803 / Kazusa).